The chain runs to 355 residues: Inner membrane protein YghQ (355 aa).

Residues 1 to 37 (MAGFNIKHWFADGAFRTIIRNSAWLGSSNVVSALLGL) lie on the Periplasmic side of the membrane. The helical transmembrane segment at 38–58 (LALSCAGKGMTPAMFGVLVIV) threads the bilayer. Residues 59–100 (QSYAKSISDFIKFQTWQLVVQYGTPALTNNNPQQFRNVVSFS) are Cytoplasmic-facing. The chain crosses the membrane as a helical span at residues 101-121 (FSLDIVSGAVAIVGGIALLPF). At 122-134 (LSHSLGLDDQSFW) the chain is on the periplasmic side. Residues 135–155 (LAALYCTLIPSMASSTPTGIL) form a helical membrane-spanning segment. The Cytoplasmic segment spans residues 156–177 (RAVDRFDLIAVQQATKPFLRAA). A helical transmembrane segment spans residues 178 to 198 (GSVVAWYFDFGFAGFVIAWYV). Residues 199–261 (SNLVGGTMYW…WSARNSCSTV (63 aa)) are Periplasmic-facing. Residues 262–282 (LVGIVLGPAAAGLFKIAMTFF) form a helical membrane-spanning segment. Topologically, residues 283–323 (DAAGTPAGLLGKSFYPEVMRLDPRTTRPWLLGVKSGLLAGG) are cytoplasmic. A helical transmembrane segment spans residues 324–344 (IGILVALAVLIVGKPLISLVF). Over 345 to 355 (GVKYLEAYDLI) the chain is Periplasmic.

Its subcellular location is the cell inner membrane. The protein is Inner membrane protein YghQ (yghQ) of Escherichia coli (strain K12).